The following is a 156-amino-acid chain: Cyanate hydratase (156 aa).

Residues R96, E99, and S122 contribute to the active site.

This sequence belongs to the cyanase family.

It catalyses the reaction cyanate + hydrogencarbonate + 3 H(+) = NH4(+) + 2 CO2. In terms of biological role, catalyzes the reaction of cyanate with bicarbonate to produce ammonia and carbon dioxide. This chain is Cyanate hydratase, found in Burkholderia pseudomallei (strain 1106a).